We begin with the raw amino-acid sequence, 488 residues long: Probable (S)-N-methylcoclaurine 3'-hydroxylase isozyme 2 (488 aa).

A helical membrane pass occupies residues E2 to L21. Heme is bound at residue C427.

The protein belongs to the cytochrome P450 family. It depends on heme as a cofactor. Expressed at low levels in roots.

Its subcellular location is the endoplasmic reticulum membrane. It localises to the microsome membrane. It carries out the reaction (S)-N-methylcoclaurine + reduced [NADPH--hemoprotein reductase] + O2 = (S)-3'-hydroxy-N-methylcoclaurine + oxidized [NADPH--hemoprotein reductase] + H2O + H(+). It participates in alkaloid biosynthesis; (S)-reticuline biosynthesis; (S)-reticuline from (S)-norcoclaurine: step 3/4. Functionally, 3'-hydroxylation of (S)-N-methylcoclaurine. The protein is Probable (S)-N-methylcoclaurine 3'-hydroxylase isozyme 2 (CYP80B2) of Coptis japonica (Japanese goldthread).